We begin with the raw amino-acid sequence, 206 residues long: Large ribosomal subunit protein uL3 (206 aa).

Positions 127 to 151 (SGGPSSHGSKFHRHLGGTGQATTPA) are disordered.

It belongs to the universal ribosomal protein uL3 family. Part of the 50S ribosomal subunit. Forms a cluster with proteins L14 and L19.

Functionally, one of the primary rRNA binding proteins, it binds directly near the 3'-end of the 23S rRNA, where it nucleates assembly of the 50S subunit. In Borreliella burgdorferi (strain ZS7) (Borrelia burgdorferi), this protein is Large ribosomal subunit protein uL3.